We begin with the raw amino-acid sequence, 660 residues long: MMPSSQRPSPRGSRQSPSPDQRGRIAFAILATLVVAVLLLTLFSHAPSGQPLGYSTFIHDVQAKQVRTAVLNNTTGQITGSLTNGTAYSVTGPLPYTSSELSTLSKAHVQVSYITPGPGIASTIIEYVIFFGIFIGIWVYLTRRTQGSVNGIMSVGRSRAKTYTTERPKTTFDDVAGYQGVKGEVKEVVDFLRDPSRFSQLGARIPKGILLVGPPGTGKTLLARAVAGEAGVPFMSVSGSDFMEMFVGVGAARVRDLFQTARRQSPSIIFIDEIDSIGRKRGTGLGGGHDEREQTLNQMLSEMDGFDPAEGIVVMAATNRPDILDPALLRPGRFDRQIVVPLPDLPERLAILQVHTRGKRLAPDVDLEVMAKGTPGMSGADLANLVNEAALNAVRRGATDIAMADFDSARDRIIMGQRREATILSDEEKERVAFHEGGHAVLAYVLDYSDPVHKVTILPTGMALGVTQQLPERDRHLYPREYIEDTLVVRMGGRVAELLVYGDLSTGAANDLQGNTELARRMVREWGMSERLGPMAWGSQNVVFLGEDLLHSAEYSDRTARLVDEEVERILREQEERATELLRQHLPGLIAVAHALLERETISGEEVGRLVDEAAGHPIHPDGKRVLPIAKLPEYAELEQFTVTNGNNHAASHDDTDPVS.

Residues 1-20 (MMPSSQRPSPRGSRQSPSPD) are disordered. Residues 1–24 (MMPSSQRPSPRGSRQSPSPDQRGR) lie on the Cytoplasmic side of the membrane. The chain crosses the membrane as a helical span at residues 25 to 45 (IAFAILATLVVAVLLLTLFSH). At 46–118 (APSGQPLGYS…VQVSYITPGP (73 aa)) the chain is on the extracellular side. Residues 119 to 139 (GIASTIIEYVIFFGIFIGIWV) form a helical membrane-spanning segment. Residues 140–660 (YLTRRTQGSV…ASHDDTDPVS (521 aa)) lie on the Cytoplasmic side of the membrane. 213-220 (GPPGTGKT) lines the ATP pocket. Residue histidine 435 coordinates Zn(2+). The active site involves glutamate 436. 2 residues coordinate Zn(2+): histidine 439 and aspartate 511.

This sequence in the central section; belongs to the AAA ATPase family. In the C-terminal section; belongs to the peptidase M41 family. As to quaternary structure, homohexamer. The cofactor is Zn(2+).

The protein resides in the cell membrane. Its function is as follows. Acts as a processive, ATP-dependent zinc metallopeptidase for both cytoplasmic and membrane proteins. Plays a role in the quality control of integral membrane proteins. This is ATP-dependent zinc metalloprotease FtsH from Acidimicrobium ferrooxidans (strain DSM 10331 / JCM 15462 / NBRC 103882 / ICP).